A 288-amino-acid polypeptide reads, in one-letter code: N-acetyltransferase ECO1 (288 aa).

Positions 1 to 50 (MKRDITQLLSPELSQSSSRNDKKRKPTNSNKKVQTVLNFPSSSPNASQST) are disordered. Low complexity predominate over residues 7-18 (QLLSPELSQSSS). Polar residues predominate over residues 27-50 (TNSNKKVQTVLNFPSSSPNASQST). The segment at 50–74 (TTCPTCGMTYYSHVSKDNDVHNKYH) adopts a CCHH-type zinc-finger fold.

The protein belongs to the acetyltransferase family. ECO subfamily.

It is found in the nucleus. Its function is as follows. Probable acetyltransferase required for the establishment of sister chromatid cohesion and couple the processes of cohesion and DNA replication to ensure that only sister chromatids become paired together. In contrast to the structural cohesins, the deposition and establishment factors are required only during S phase. Acts by acetylating the cohesin complex component SMC3. This is N-acetyltransferase ECO1 (ECO1) from Debaryomyces hansenii (strain ATCC 36239 / CBS 767 / BCRC 21394 / JCM 1990 / NBRC 0083 / IGC 2968) (Yeast).